Reading from the N-terminus, the 424-residue chain is Myb family transcription factor RLI1 (424 aa).

Positions 144 to 165 are disordered; sequence RPQKRDSGERTPLPPPSQQQHQ. Positions 238 to 298 constitute an HTH myb-type domain; the sequence is APSKTRIRWT…HLQKYRIAKY (61 aa). Residues 269-294 constitute a DNA-binding region (H-T-H motif); it reads PKGILKLMNSDGLTIYHIKSHLQKYR. The LHEQLE motif lies at 342–347; it reads LHEQLE. Residues 342–391 adopt a coiled-coil conformation; it reads LHEQLEIQRNLQLRIEEQGKRLQKMFEDQLKASRSVMEPQELDDVVAFAA.

It belongs to the MYB-CC family. Homodimer. Interacts with PHR2 in the nucleus. Interacts with SPX1 and SPX2 in the nucleus; these interactions prevent binding to the promoters of target genes, thus regulating negatively leaf inclination in response to phosphate (Pi) starvation.

The protein resides in the nucleus. Its function is as follows. Transcription factor binding to specific DNA sequences of target genes promoters, such as the motif R1BS 5'-NAKATNCN-3' and the motif P1BS 5'-GNATATNC-3' to trigger their expression. Nitrate-induced component involved in modulating phosphate (Pi) response and homeostasis together with PHR2; activates directly the expression of Pi starvation-induced (PSI) genes upon nitrate disponibility, thus triggering the nitrate-induced phosphate response (NIPR) promoting Pi uptake activity. Involved in the shoot architecture; positively regulates leaf inclination by affecting lamina joint cell elongation via the direct promotion of ILI4/BU1 and BC1 genes expression, especially in response to phosphate (Pi) availability. Regulates both brassinolide (BL) biosynthesis and signaling by directly activating BL-biosynthesis and signaling genes. In Oryza sativa subsp. indica (Rice), this protein is Myb family transcription factor RLI1.